The following is a 104-amino-acid chain: uncharacterized protein (104 aa).

A disordered region spans residues 51–70 (NPGRSLDNNKDVSDKGRSEF). Positions 57–70 (DNNKDVSDKGRSEF) are enriched in basic and acidic residues.

This sequence belongs to the protein-tyrosine phosphatase family.

This is an uncharacterized protein from Xanthomonas campestris pv. campestris (strain ATCC 33913 / DSM 3586 / NCPPB 528 / LMG 568 / P 25).